A 256-amino-acid chain; its full sequence is Imidazole glycerol phosphate synthase subunit HisF (256 aa).

Active-site residues include Asp12 and Asp131.

This sequence belongs to the HisA/HisF family. In terms of assembly, heterodimer of HisH and HisF.

It localises to the cytoplasm. The enzyme catalyses 5-[(5-phospho-1-deoxy-D-ribulos-1-ylimino)methylamino]-1-(5-phospho-beta-D-ribosyl)imidazole-4-carboxamide + L-glutamine = D-erythro-1-(imidazol-4-yl)glycerol 3-phosphate + 5-amino-1-(5-phospho-beta-D-ribosyl)imidazole-4-carboxamide + L-glutamate + H(+). The protein operates within amino-acid biosynthesis; L-histidine biosynthesis; L-histidine from 5-phospho-alpha-D-ribose 1-diphosphate: step 5/9. Functionally, IGPS catalyzes the conversion of PRFAR and glutamine to IGP, AICAR and glutamate. The HisF subunit catalyzes the cyclization activity that produces IGP and AICAR from PRFAR using the ammonia provided by the HisH subunit. In Azotobacter vinelandii (strain DJ / ATCC BAA-1303), this protein is Imidazole glycerol phosphate synthase subunit HisF.